The sequence spans 66 residues: Large ribosomal subunit protein bL35c (66 aa).

The protein belongs to the bacterial ribosomal protein bL35 family.

The protein resides in the plastid. Its subcellular location is the chloroplast. This chain is Large ribosomal subunit protein bL35c, found in Guillardia theta (Cryptophyte).